A 353-amino-acid chain; its full sequence is Methylthioribose-1-phosphate isomerase (353 aa).

Substrate contacts are provided by residues 51–53 (RGA), R94, and Q199. Residue D240 is the Proton donor of the active site. 250–251 (NK) provides a ligand contact to substrate.

Belongs to the EIF-2B alpha/beta/delta subunits family. MtnA subfamily. Homodimer.

The enzyme catalyses 5-(methylsulfanyl)-alpha-D-ribose 1-phosphate = 5-(methylsulfanyl)-D-ribulose 1-phosphate. Its pathway is amino-acid biosynthesis; L-methionine biosynthesis via salvage pathway; L-methionine from S-methyl-5-thio-alpha-D-ribose 1-phosphate: step 1/6. In terms of biological role, catalyzes the interconversion of methylthioribose-1-phosphate (MTR-1-P) into methylthioribulose-1-phosphate (MTRu-1-P). The polypeptide is Methylthioribose-1-phosphate isomerase (Bacillus cereus (strain ATCC 14579 / DSM 31 / CCUG 7414 / JCM 2152 / NBRC 15305 / NCIMB 9373 / NCTC 2599 / NRRL B-3711)).